We begin with the raw amino-acid sequence, 86 residues long: Kappa-theraphotoxin-Cg1a 6 (86 aa).

Residues 1–21 form the signal peptide; sequence MKVSVLITLAVLGVMFVWASA. Residues 22–50 constitute a propeptide that is removed on maturation; that stretch reads AELEERGSDQRDSPAWLKSMERIFQSEER. 3 disulfides stabilise this stretch: C52-C66, C59-C71, and C65-C78. Phenylalanine amide is present on F84.

Belongs to the neurotoxin 10 (Hwtx-1) family. 28 (Jztx-11) subfamily. In terms of tissue distribution, expressed by the venom gland.

The protein resides in the secreted. In terms of biological role, this toxin acts as a voltage-dependent gating-modifier. It inhibits the sodium conductance (IC(50)=124 nM) and slows the fast inactivation (EC(50)=1180 nM) of Nav1.5/SCN5A. It significantly shifts the activation to more depolarized voltages and decreases the deactivation of Nav1.5 currents upon extreme depolarization, but only slightly affects voltage-dependence of steady-state inactivation. In addition, this toxin causes an approximately five-fold decrease in the rate of recovery from inactivation and an approximately 1.9-fold reduction in the closed-state inactivation rate. This toxin integrates the functions of site 3 toxins (alpha-scorpion toxins) with site 4 toxins (beta-scorpion and spider toxins) by targeting multiple sites on Nav1.5. Also shows inhibition of voltage-gated potassium channels (5 uM completely inhibits Kv2.1/KCNB1, whereas 5 uM moderately inhibits Kv4.2/KCND2 Kv4.1/KCND1 channels). The protein is Kappa-theraphotoxin-Cg1a 6 of Chilobrachys guangxiensis (Chinese earth tiger tarantula).